Here is a 461-residue protein sequence, read N- to C-terminus: uncharacterized protein (461 aa).

Residues 1–19 (MEKCSHESGRHSAENDGKY) are compositionally biased toward basic and acidic residues. Residues 1-21 (MEKCSHESGRHSAENDGKYDI) are disordered.

Belongs to the CapA family.

Functionally, could be involved in the biosynthesis of a cell wall component. This is an uncharacterized protein from Sinorhizobium fredii (strain NBRC 101917 / NGR234).